The primary structure comprises 188 residues: MASTNDLKNGLVLKLDGGQLWSVVEFQHVKPGKGPAFVRTKLKNVLSGKVVDKTFNAGVKVETATIDKRDMQFSYMDGEYFVFMDMDTYDQLMVDRKSVGDAANFLIEGFTATVAQHEGEVLFVELPAAVELVIQETEPGVQGDRSTGGTKPATLETGHQIQVPLFITTGEKIKVDTRTSDYLGRVNS.

This sequence belongs to the elongation factor P family.

The protein resides in the cytoplasm. It participates in protein biosynthesis; polypeptide chain elongation. Its function is as follows. Involved in peptide bond synthesis. Stimulates efficient translation and peptide-bond synthesis on native or reconstituted 70S ribosomes in vitro. Probably functions indirectly by altering the affinity of the ribosome for aminoacyl-tRNA, thus increasing their reactivity as acceptors for peptidyl transferase. The polypeptide is Elongation factor P (Streptomyces avermitilis (strain ATCC 31267 / DSM 46492 / JCM 5070 / NBRC 14893 / NCIMB 12804 / NRRL 8165 / MA-4680)).